The sequence spans 93 residues: MPKSKVRKKNDFTVSAVSRTPMKVKVGPSSVWFVSLFIGLMLIGLIWLMVFQLAAIGSQAPTALNWMAQLGPWNYAIAFAFMITGLLLTMRWH.

2 helical membrane passes run 31–51 (VWFV…LMVF) and 70–90 (LGPW…LLTM).

The protein belongs to the CrgA family.

Its subcellular location is the cell membrane. In terms of biological role, involved in cell division. This chain is Cell division protein CrgA, found in Mycobacterium bovis (strain ATCC BAA-935 / AF2122/97).